A 197-amino-acid polypeptide reads, in one-letter code: Peptide deformylase (197 aa).

The Fe cation site is built by Cys-106 and His-148. Residue Glu-149 is part of the active site. His-152 lines the Fe cation pocket.

Belongs to the polypeptide deformylase family. Requires Fe(2+) as cofactor.

It carries out the reaction N-terminal N-formyl-L-methionyl-[peptide] + H2O = N-terminal L-methionyl-[peptide] + formate. Its function is as follows. Removes the formyl group from the N-terminal Met of newly synthesized proteins. Requires at least a dipeptide for an efficient rate of reaction. N-terminal L-methionine is a prerequisite for activity but the enzyme has broad specificity at other positions. This chain is Peptide deformylase, found in Mycobacterium bovis (strain ATCC BAA-935 / AF2122/97).